Reading from the N-terminus, the 569-residue chain is Acyl-CoA transferase FVEG_12629 (569 aa).

The protein belongs to the CoA-transferase III family.

Functionally, acyl-CoA transferase; part of the Fusarium detoxification of benzoxazolinone cluster 2 (FDB2) involved in the degradation of benzoxazolinones produced by the host plant. Maize, wheat, and rye produce the 2 benzoxazinone phytoanticipins 2,4-dihy-droxy-7-methoxy-1,4-benzoxazin-3-one (DIMBOA) and 2,4-dihydroxy-1,4-benzoxazin-3-one (DIBOA) that, due to their inherent instability once released, spontaneously degrade to the more stable corresponding benzoxazolinones, 6-methoxy-2-benzoxazolinone (MBOA) and 2-benzoxazolinone (BOA), respectively. The first step in the detoxification of benzoxazolinones involves the hydrolysis of the cyclic ester bond of benzoxazolinones by the FDB1 cluster gamma-lactamase MBL1 to aminophenols. MBL1 is able to convert BOA into 2-aminophenol (2-AP), as well as MBOA into 5-methoxy-2-aminophenol (2-AMP). The FDB2 cluster N-malonyltransferase FDB2/NAT1 then metabolizes aminophenols via N-malonylation to non-toxic malonamic acids. FDB2/NAT1 converts 2-AP into N-(2-hydroxyphenyl) malonamic acid (HPMA) and 2-AMP into N-(2-hydroxy-4-methoxyphenyl) malonamic acid (HMPMA). The duplicated dienlactone hydrolases DLH1 and DLH2 may provide redundant function for hydrolyzing the lactone moiety in the BOA molecule. The roles of the amidases an other enzymes encoded by the 2 FDB clusters have not been identified so far. This is Acyl-CoA transferase FVEG_12629 from Gibberella moniliformis (strain M3125 / FGSC 7600) (Maize ear and stalk rot fungus).